We begin with the raw amino-acid sequence, 481 residues long: uncharacterized protein (481 aa).

The next 11 membrane-spanning stretches (helical) occupy residues 14-34 (LGFC…GIFL), 46-66 (FAPM…IVFA), 90-110 (IGIY…GVLA), 134-154 (FSVK…INLF), 167-187 (TVGK…IITT), 218-238 (FSSM…FESI), 258-278 (IAIF…MLLG), 303-323 (IIVV…SFGA), 377-397 (LAVI…IALA), 411-431 (AFTD…LAVS), and 446-466 (YFSI…AYLH).

The protein belongs to the amino acid-polyamine-organocation (APC) superfamily.

It is found in the cell membrane. Functionally, probable amino-acid or metabolite transport protein. This is an uncharacterized protein from Mycobacterium bovis (strain ATCC BAA-935 / AF2122/97).